Here is a 271-residue protein sequence, read N- to C-terminus: Shikimate dehydrogenase (NADP(+)) (271 aa).

Shikimate-binding positions include 16–18 (SRS) and threonine 63. The Proton acceptor role is filled by lysine 67. The shikimate site is built by asparagine 88 and aspartate 104. NADP(+) contacts are provided by residues 128-132 (GAGGA), 152-157 (NRTASK), and methionine 215. Tyrosine 217 contributes to the shikimate binding site. Glycine 238 contacts NADP(+).

The protein belongs to the shikimate dehydrogenase family. Homodimer.

The enzyme catalyses shikimate + NADP(+) = 3-dehydroshikimate + NADPH + H(+). It functions in the pathway metabolic intermediate biosynthesis; chorismate biosynthesis; chorismate from D-erythrose 4-phosphate and phosphoenolpyruvate: step 4/7. In terms of biological role, involved in the biosynthesis of the chorismate, which leads to the biosynthesis of aromatic amino acids. Catalyzes the reversible NADPH linked reduction of 3-dehydroshikimate (DHSA) to yield shikimate (SA). The polypeptide is Shikimate dehydrogenase (NADP(+)) (Chromohalobacter salexigens (strain ATCC BAA-138 / DSM 3043 / CIP 106854 / NCIMB 13768 / 1H11)).